Consider the following 213-residue polypeptide: Holliday junction branch migration complex subunit RuvA (213 aa).

Residues 1 to 64 (MIASVTGEVA…DEAPLLFGFA (64 aa)) form a domain I region. Residues 65–143 (QGDEKEIFTV…LPEPPVQQAN (79 aa)) are domain II. The interval 144 to 152 (QPQVPVWRD) is flexible linker. Positions 152-213 (DQVVDALTGL…GTTHAPTGRR (62 aa)) are domain III.

The protein belongs to the RuvA family. In terms of assembly, homotetramer. Forms an RuvA(8)-RuvB(12)-Holliday junction (HJ) complex. HJ DNA is sandwiched between 2 RuvA tetramers; dsDNA enters through RuvA and exits via RuvB. An RuvB hexamer assembles on each DNA strand where it exits the tetramer. Each RuvB hexamer is contacted by two RuvA subunits (via domain III) on 2 adjacent RuvB subunits; this complex drives branch migration. In the full resolvosome a probable DNA-RuvA(4)-RuvB(12)-RuvC(2) complex forms which resolves the HJ.

The protein resides in the cytoplasm. Its function is as follows. The RuvA-RuvB-RuvC complex processes Holliday junction (HJ) DNA during genetic recombination and DNA repair, while the RuvA-RuvB complex plays an important role in the rescue of blocked DNA replication forks via replication fork reversal (RFR). RuvA specifically binds to HJ cruciform DNA, conferring on it an open structure. The RuvB hexamer acts as an ATP-dependent pump, pulling dsDNA into and through the RuvAB complex. HJ branch migration allows RuvC to scan DNA until it finds its consensus sequence, where it cleaves and resolves the cruciform DNA. The sequence is that of Holliday junction branch migration complex subunit RuvA from Kocuria rhizophila (strain ATCC 9341 / DSM 348 / NBRC 103217 / DC2201).